Reading from the N-terminus, the 253-residue chain is Phosphate import ATP-binding protein PstB 1 (253 aa).

One can recognise an ABC transporter domain in the interval 7 to 248 (LQIRDLSVYY…PKRKETEDYI (242 aa)). 39–46 (GPSGSGKS) contacts ATP.

Belongs to the ABC transporter superfamily. Phosphate importer (TC 3.A.1.7) family. The complex is composed of two ATP-binding proteins (PstB), two transmembrane proteins (PstC and PstA) and a solute-binding protein (PstS).

The protein resides in the cell membrane. The catalysed reaction is phosphate(out) + ATP + H2O = ADP + 2 phosphate(in) + H(+). Part of the ABC transporter complex PstSACB involved in phosphate import. Responsible for energy coupling to the transport system. This chain is Phosphate import ATP-binding protein PstB 1, found in Streptococcus pyogenes serotype M2 (strain MGAS10270).